A 292-amino-acid polypeptide reads, in one-letter code: Leucine-rich repeat-containing protein 10B (292 aa).

The interval 1–20 (MGIAESTPDELPSDAEEQLR) is disordered. The segment covering 7 to 16 (TPDELPSDAE) has biased composition (acidic residues). LRR repeat units lie at residues 22 to 43 (GDQQ…VCAL), 45 to 66 (RLQK…IEEL), 68 to 90 (ELRI…CRLP), 91 to 112 (RLTR…FAQL), 114 to 136 (SLRC…LRLV), 137 to 158 (ALQS…LPRM), 160 to 181 (GLRG…LLRM), 183 to 204 (RLHI…HPLR), and 205 to 226 (ALRV…ADTV). The disordered stretch occupies residues 236-261 (RMAERDEPTPRPPPRRPARAFEDEEE).

This is Leucine-rich repeat-containing protein 10B (LRRC10B) from Homo sapiens (Human).